A 159-amino-acid chain; its full sequence is MKLHELYPFPEERASRKRVGRGRATGWGCTSGRGNKGQNSRAGAKHRAWFEGGQMPIARRLPKRGFKNYPFKVVFQPINLDRLLASFDGKDAITLDDIYDRGLAPAGALVKILSVGEVAAAVTVEAHKFSAKAAEKITAAGGKVIALGTPEALTETPTE.

The tract at residues 14–44 is disordered; it reads ASRKRVGRGRATGWGCTSGRGNKGQNSRAGA. Over residues 23-35 the composition is skewed to gly residues; that stretch reads RATGWGCTSGRGN.

This sequence belongs to the universal ribosomal protein uL15 family. As to quaternary structure, part of the 50S ribosomal subunit.

Binds to the 23S rRNA. This is Large ribosomal subunit protein uL15 from Solidesulfovibrio magneticus (strain ATCC 700980 / DSM 13731 / RS-1) (Desulfovibrio magneticus).